Here is a 352-residue protein sequence, read N- to C-terminus: Phosphoribosylformylglycinamidine cyclo-ligase (352 aa).

Belongs to the AIR synthase family.

The protein localises to the cytoplasm. The enzyme catalyses 2-formamido-N(1)-(5-O-phospho-beta-D-ribosyl)acetamidine + ATP = 5-amino-1-(5-phospho-beta-D-ribosyl)imidazole + ADP + phosphate + H(+). It participates in purine metabolism; IMP biosynthesis via de novo pathway; 5-amino-1-(5-phospho-D-ribosyl)imidazole from N(2)-formyl-N(1)-(5-phospho-D-ribosyl)glycinamide: step 2/2. The protein is Phosphoribosylformylglycinamidine cyclo-ligase of Pseudomonas fluorescens (strain ATCC BAA-477 / NRRL B-23932 / Pf-5).